The sequence spans 613 residues: UBX domain-containing protein 3 (613 aa).

Disordered regions lie at residues 67–223 and 453–472; these read PAAA…PINP and MNEQSERREREEREAIRNQQ. A compositionally biased stretch (low complexity) spans 68–82; that stretch reads AAASGRNAGASSSSR. The segment covering 137–149 has biased composition (basic residues); the sequence is THHRGAAIPRQKR. Positions 158 to 169 are enriched in low complexity; it reads SSSGSSSASFSS. A coiled-coil region spans residues 452–517; sequence RMNEQSERRE…EEEECVRRQT (66 aa). In terms of domain architecture, UBX spans 531–610; it reads PLAEIINVKF…KWPAREQIFV (80 aa). The Interaction with cdc-48 motif lies at 582–584; it reads FPK.

Forms a complex composed of ubxn-3, cdc-48.1, ufd-1 and npl-4.1. Forms a complex composed of ubxn-3, cdc-48.1 and/or cdc-48.2 and substrate cdt-1. Interacts (via FPK motif) with cdc-48.1 (via N-terminus) and cdc-48.2 (via N-terminus). Interacts (via N-terminus) with cdt-1 and ubiquitinated protein substrates; the interaction is cdc-48-independent. May interact with npl-4.1. In terms of tissue distribution, expressed in the germline (at protein level). Expressed in spermatocytes but not in mature sperm (at protein level). Expressed in the spermatheca and nerve cells.

Its subcellular location is the nucleus. The protein resides in the cytoplasm. The protein localises to the perinuclear region. It is found in the chromosome. Ubiquitin-binding protein which acts as an adapter for ATPase cdc-48.1 and/or cdc-48.2, conferring substrate specificity. Together with ubxn-1 and ubxn-2, plays a role in hermaphrodite spermatogenesis probably by promoting the degradation of sex determination terminal factor tra-1. During mitosis, ensures the degradation of DNA licensing factor cdt-1 and the disassembly of the DNA replication CMG helicase complex by promoting the dissociation from chromatin of several of its components including cdc-45 and sld-5. In Caenorhabditis elegans, this protein is UBX domain-containing protein 3.